The chain runs to 325 residues: Beta-ketoacyl-[acyl-carrier-protein] synthase III (325 aa).

Active-site residues include C112 and H250. Positions 251 to 255 (QANSR) are ACP-binding. Residue N280 is part of the active site.

The protein belongs to the thiolase-like superfamily. FabH family. In terms of assembly, homodimer.

Its subcellular location is the cytoplasm. It catalyses the reaction malonyl-[ACP] + acetyl-CoA + H(+) = 3-oxobutanoyl-[ACP] + CO2 + CoA. The protein operates within lipid metabolism; fatty acid biosynthesis. In terms of biological role, catalyzes the condensation reaction of fatty acid synthesis by the addition to an acyl acceptor of two carbons from malonyl-ACP. Catalyzes the first condensation reaction which initiates fatty acid synthesis and may therefore play a role in governing the total rate of fatty acid production. Possesses both acetoacetyl-ACP synthase and acetyl transacylase activities. Its substrate specificity determines the biosynthesis of branched-chain and/or straight-chain of fatty acids. The protein is Beta-ketoacyl-[acyl-carrier-protein] synthase III of Lactococcus lactis subsp. lactis (strain IL1403) (Streptococcus lactis).